The primary structure comprises 165 residues: Growth arrest and DNA damage-inducible protein GADD45 alpha (165 aa).

Position 2 is a phosphothreonine (Thr2).

The protein belongs to the GADD45 family. Interacts with AURKA, PCNA, GADD45GIP1 and MAPK14.

It is found in the nucleus. Functionally, might affect PCNA interaction with some CDK (cell division protein kinase) complexes; stimulates DNA excision repair in vitro and inhibits entry of cells into S phase. In T-cells, functions as a regulator of p38 MAPKs by inhibiting p88 phosphorylation and activity. This is Growth arrest and DNA damage-inducible protein GADD45 alpha (GADD45A) from Felis catus (Cat).